We begin with the raw amino-acid sequence, 103 residues long: MDRVMKLASERAVVIFTLSSCCMCHTVTRLFCDLGVNALVHELDQDPRGKEMERALLKLLGRGPPVPVVFIGGKLVGGTNKIMSLHLGGELIPMLKNAGALWL.

The 102-residue stretch at 1-102 (MDRVMKLASE…PMLKNAGALW (102 aa)) folds into the Glutaredoxin domain. Residues Cys21 and Cys24 are joined by a disulfide bond. The Responsive for interaction with TGA factors motif lies at 100-103 (ALWL).

Belongs to the glutaredoxin family. CC-type subfamily.

Its subcellular location is the cytoplasm. It is found in the nucleus. Has a glutathione-disulfide oxidoreductase activity in the presence of NADPH and glutathione reductase. Reduces low molecular weight disulfides and proteins. In Oryza sativa subsp. japonica (Rice), this protein is Putative glutaredoxin-C14 (GRXC14).